The chain runs to 78 residues: Defensin-like protein 149 (78 aa).

The N-terminal stretch at 1-25 (MMKKLIQLSFTVMIIFTILVLGVVA) is a signal peptide. 4 cysteine pairs are disulfide-bonded: Cys36-Cys77, Cys45-Cys65, Cys50-Cys71, and Cys54-Cys73.

It belongs to the DEFL family.

Its subcellular location is the secreted. The chain is Defensin-like protein 149 (LCR5) from Arabidopsis thaliana (Mouse-ear cress).